Here is a 471-residue protein sequence, read N- to C-terminus: Putative multidrug resistance protein MdtD (471 aa).

Over 1 to 11 (MTDLPDSTRWQ) the chain is Periplasmic. The chain crosses the membrane as a helical span at residues 12–32 (LWIVAFGFFMQSLDTTIVNTA). Over 33–48 (LPSMAQSLGESPLHMH) the chain is Cytoplasmic. A helical transmembrane segment spans residues 49 to 69 (MVIVSYVLTVAVMLPASGWLA). Over 70-76 (DKVGVRN) the chain is Periplasmic. Residues 77–97 (IFFTAIVLFTLGSLFCALSGT) form a helical membrane-spanning segment. Residues 98–101 (LNEL) are Cytoplasmic-facing. A helical transmembrane segment spans residues 102-124 (LLARALQGVGGAMMVPVGRLTVM). The Periplasmic segment spans residues 125–137 (KIVPREQYMAAMT). Residues 138 to 158 (FVTLPGQVGPLLGPALGGLLV) form a helical membrane-spanning segment. Residues 159–164 (EYASWH) are Cytoplasmic-facing. The chain crosses the membrane as a helical span at residues 165-185 (WIFLINIPVGIIGAIATLLLM). Over 186–196 (PNYTMQTWRFD) the chain is Periplasmic. Residues 197 to 217 (LSGFLLLAVGMAVLTLALDGS) traverse the membrane as a helical segment. The Cytoplasmic portion of the chain corresponds to 218 to 224 (KGTGLSP). Residues 225-245 (LAIAGLVAVGVVALVLYLLHA) form a helical membrane-spanning segment. Topologically, residues 246 to 262 (RNNNRALFSLKLFRTRT) are periplasmic. The helical transmembrane segment at 263 to 283 (FSLGLAGSFAGRIGSGMLPFM) threads the bilayer. The Cytoplasmic portion of the chain corresponds to 284–285 (TP). Residues 286-306 (VFLQIGLGFSPFHAGLMMIPM) form a helical membrane-spanning segment. Residues 307-341 (VLGSMGMKRIVVQVVNRFGYRRVLVATTLGLSLVT) are Periplasmic-facing. A helical transmembrane segment spans residues 342–362 (LLFMTTALLGWYYVLPFVLFL). Over 363–395 (QGMVNSTRFSSMNTLTLKDLPDNLASSGNSLLS) the chain is Cytoplasmic. The chain crosses the membrane as a helical span at residues 396–416 (MIMQLSMSIGVTIAGLLLGLF). At 417 to 430 (GSQHVSVDSGTTQT) the chain is on the periplasmic side. A helical membrane pass occupies residues 431 to 451 (VFMYTWLSMALIIALPAFIFA). At 452–471 (RVPNDTHQNVAISRRKRSAQ) the chain is on the cytoplasmic side.

It belongs to the major facilitator superfamily. TCR/Tet family.

It is found in the cell inner membrane. This is Putative multidrug resistance protein MdtD from Shigella boydii serotype 4 (strain Sb227).